The primary structure comprises 350 residues: UDP-glucose 4-epimerase GEPI48 (350 aa).

Residue 5–36 (TVLVTGGAGYIGSHTVLQLLLGGFKAVVVDNL) coordinates NAD(+). S130 provides a ligand contact to substrate. The active-site Proton acceptor is Y154.

It belongs to the NAD(P)-dependent epimerase/dehydratase family. NAD(+) is required as a cofactor.

It catalyses the reaction UDP-alpha-D-glucose = UDP-alpha-D-galactose. Its pathway is carbohydrate metabolism; galactose metabolism. This chain is UDP-glucose 4-epimerase GEPI48, found in Cyamopsis tetragonoloba (Guar).